The following is a 140-amino-acid chain: MTQKVEFPPRHVTEEKLMEFARAVHTQNKIYHSTAAATSSGYPGLVAVPTFGAVWVGQILEYIISSDLNIDYSHIVHGEQHFLYKRPIFAGDILRPILRIKRDRAFGNARQIVLEVTLLSEGSNDDVLVMTITLIVRGKA.

The protein belongs to the UPF0336 family.

This Tropheryma whipplei (strain TW08/27) (Whipple's bacillus) protein is UPF0336 protein TW736.